The sequence spans 103 residues: c-Myc-binding protein (103 aa).

The protein belongs to the AMY1 family. As to quaternary structure, binds via its C-terminal region to the N-terminal region of MYC. Associates with AKAP1/S-AKAP84. Interacts with MYCBPAP. Interacts with CFAP91.

The protein localises to the cytoplasm. The protein resides in the nucleus. Functionally, may control the transcriptional activity of MYC. Stimulates the activation of E box-dependent transcription by MYC. This Pongo abelii (Sumatran orangutan) protein is c-Myc-binding protein (MYCBP).